A 76-amino-acid polypeptide reads, in one-letter code: Acyl carrier protein (76 aa).

The region spanning 1-74 is the Carrier domain; the sequence is MEERIKEIIA…DVINYIKEKK (74 aa). Serine 34 carries the post-translational modification O-(pantetheine 4'-phosphoryl)serine.

The protein belongs to the acyl carrier protein (ACP) family. 4'-phosphopantetheine is transferred from CoA to a specific serine of apo-ACP by AcpS. This modification is essential for activity because fatty acids are bound in thioester linkage to the sulfhydryl of the prosthetic group.

It localises to the cytoplasm. It participates in lipid metabolism; fatty acid biosynthesis. Functionally, carrier of the growing fatty acid chain in fatty acid biosynthesis. The protein is Acyl carrier protein of Persephonella marina (strain DSM 14350 / EX-H1).